Consider the following 479-residue polypeptide: Ribosomal RNA small subunit methyltransferase F (479 aa).

Residues 125-131 (AAAPGSK), Glu149, Asp176, and Asp194 each bind S-adenosyl-L-methionine. Residue Cys247 is the Nucleophile of the active site.

Belongs to the class I-like SAM-binding methyltransferase superfamily. RsmB/NOP family.

Its subcellular location is the cytoplasm. The enzyme catalyses cytidine(1407) in 16S rRNA + S-adenosyl-L-methionine = 5-methylcytidine(1407) in 16S rRNA + S-adenosyl-L-homocysteine + H(+). Specifically methylates the cytosine at position 1407 (m5C1407) of 16S rRNA. This chain is Ribosomal RNA small subunit methyltransferase F, found in Salmonella arizonae (strain ATCC BAA-731 / CDC346-86 / RSK2980).